The sequence spans 475 residues: Methylenomycin A resistance protein (475 aa).

The next 14 helical transmembrane spans lie at 28-48, 65-85, 93-113, 123-143, 152-172, 173-193, 212-232, 240-260, 285-305, 314-334, 346-366, 371-391, 416-436, and 439-459; these read ITAL…VNVA, WIVD…GGLA, VYLW…LAPT, VQGA…VFSF, MLGL…TVGG, LMVS…IGAI, LAVP…FALI, TAGP…LLAL, LVGF…GLYF, FQAG…NIVY, LLTA…TITA, WVVA…SPGM, QIGS…TSDW, and GAAI…LSAW.

It belongs to the major facilitator superfamily.

It is found in the cell membrane. Its function is as follows. Resistance to the epoxide antibiotic methylenomycin A; probably by mediating its efflux. This chain is Methylenomycin A resistance protein (mmr), found in Streptomyces coelicolor (strain ATCC BAA-471 / A3(2) / M145).